The primary structure comprises 224 residues: Large ribosomal subunit protein uL1 (224 aa).

It belongs to the universal ribosomal protein uL1 family. Part of the 50S ribosomal subunit.

Its function is as follows. Binds directly to 23S rRNA. The L1 stalk is quite mobile in the ribosome, and is involved in E site tRNA release. In terms of biological role, protein L1 is also a translational repressor protein, it controls the translation of the L11 operon by binding to its mRNA. This chain is Large ribosomal subunit protein uL1, found in Borrelia duttonii (strain Ly).